A 191-amino-acid chain; its full sequence is NADH-quinone oxidoreductase subunit B 2 (191 aa).

[4Fe-4S] cluster contacts are provided by cysteine 69, cysteine 70, cysteine 134, and cysteine 164.

The protein belongs to the complex I 20 kDa subunit family. NDH-1 is composed of 14 different subunits. Subunits NuoB, C, D, E, F, and G constitute the peripheral sector of the complex. It depends on [4Fe-4S] cluster as a cofactor.

Its subcellular location is the cell inner membrane. It catalyses the reaction a quinone + NADH + 5 H(+)(in) = a quinol + NAD(+) + 4 H(+)(out). Functionally, NDH-1 shuttles electrons from NADH, via FMN and iron-sulfur (Fe-S) centers, to quinones in the respiratory chain. Couples the redox reaction to proton translocation (for every two electrons transferred, four hydrogen ions are translocated across the cytoplasmic membrane), and thus conserves the redox energy in a proton gradient. The chain is NADH-quinone oxidoreductase subunit B 2 from Gluconacetobacter diazotrophicus (strain ATCC 49037 / DSM 5601 / CCUG 37298 / CIP 103539 / LMG 7603 / PAl5).